The primary structure comprises 1644 residues: Terminal uridylyltransferase 4 (1644 aa).

Disordered stretches follow at residues 30–60 and 75–277; these read SNQT…KQND and AASV…EMDY. At serine 102 the chain carries Phosphoserine. Residues 108–123 are compositionally biased toward polar residues; it reads KGSSQTKLEKTPSLQT. Position 131 is a phosphoserine (serine 131). 2 stretches are compositionally biased toward polar residues: residues 146 to 156 and 163 to 174; these read AEATTEKALNS and TPTSQMKLQKTP. Phosphoserine is present on serine 176. 2 stretches are compositionally biased toward polar residues: residues 194 to 209 and 226 to 242; these read QTES…SSFV and LENS…TDNI. Residues 258 to 272 show a composition bias toward basic and acidic residues; the sequence is DLSKMKSEESNKENS. The interval 273–353 is required for interaction with LIN28A and pre-let-7 RNA; sequence SEMDYLENAT…KEKRHKKNIL (81 aa). 4 residues coordinate Zn(2+): cysteine 326, cysteine 329, histidine 342, and histidine 348. A compositionally biased stretch (basic and acidic residues) spans 603–623; sequence IADENKAKADEPKDDTKKTET. Residues 603–640 form a disordered region; that stretch reads IADENKAKADEPKDDTKKTETDNQSNAAKAKHGKSPLT. The 50-residue stretch at 649–698 folds into the PAP-associated 1 domain; the sequence is LGQLWLELLKFYTLDFALEEYVICVRIQDILTRENKNWPKRRIAIEDPFS. Disordered stretches follow at residues 733–759 and 812–841; these read KGGN…VKSD and HGQD…DLTP. The segment covering 745 to 755 has biased composition (basic residues); it reads KEKGKLSSKKP. The segment covering 815-827 has biased composition (low complexity); sequence DSSSLSTASGGSD. The segment covering 828–837 has biased composition (basic and acidic residues); the sequence is LKQKSAEKQG. A sufficient for monouridylation activity region spans residues 918 to 1634; that stretch reads DKFILTSGKP…CATRRCRERC (717 aa). The CCHC-type 1 zinc-finger motif lies at 930 to 947; that stretch reads IVCSICKKDGHSKNDCPE. UTP-binding positions include 1015–1018, 1025–1028, asparagine 1098, lysine 1120, 1138–1142, and histidine 1254; these read SSKN, SDLD, and SYAYI. Aspartate 1026 and aspartate 1028 together coordinate Mg(2+). Residues 1201–1254 enclose the PAP-associated 2 domain; sequence SLGELWLGLLRFYTEEFDFKEYVISIRQKKLLTTFEKQWTSKCIAIEDPFDLNH. The CCHC-type 2 zinc finger occupies 1310–1327; it reads RCCRVCGKIGHYMKDCPK. A disordered region spans residues 1329 to 1350; that stretch reads KRLKKKDSEEEKEGNEEEKDSR. The CCHC-type 3 zinc-finger motif lies at 1358–1375; sequence LRCFICGDAGHVRRECPE. The segment covering 1402–1427 has biased composition (low complexity); sequence AGSAQQQSDQSIRTRQSSECSDSPSY. A disordered region spans residues 1402–1483; it reads AGSAQQQSDQ…LYNFPQSPPA (82 aa). Residues 1428–1450 are compositionally biased toward pro residues; the sequence is SPQPQPFPQNSPQPSALPPPPSQ. Residues 1451 to 1473 show a composition bias toward low complexity; that stretch reads PGSQPKLGPPQQGGQPPHQVQMP. Position 1624 is an omega-N-methylarginine (arginine 1624).

Belongs to the DNA polymerase type-B-like family. Interacts with LIN28A in the presence of pre-let-7 RNA. Interacts with T2BP. Interacts with MOV10; the interaction is RNA-dependent. Mg(2+) serves as cofactor. It depends on Mn(2+) as a cofactor. Ubiquitously expressed.

It localises to the nucleus. The protein resides in the cytoplasm. Its subcellular location is the cytoplasmic ribonucleoprotein granule. The catalysed reaction is RNA(n) + UTP = RNA(n)-3'-uridine ribonucleotide + diphosphate. Its function is as follows. Uridylyltransferase that mediates the terminal uridylation of mRNAs with short (less than 25 nucleotides) poly(A) tails, hence facilitating global mRNA decay. Essential for both oocyte maturation and fertility. Through 3' terminal uridylation of mRNA, sculpts, with TUT7, the maternal transcriptome by eliminating transcripts during oocyte growth. Involved in microRNA (miRNA)-induced gene silencing through uridylation of deadenylated miRNA targets. Also functions as an integral regulator of microRNA biogenesiS using 3 different uridylation mechanisms. Acts as a suppressor of miRNA biogenesis by mediating the terminal uridylation of some miRNA precursors, including that of let-7 (pre-let-7), miR107, miR-143 and miR-200c. Uridylated miRNAs are not processed by Dicer and undergo degradation. Degradation of pre-let-7 contributes to the maintenance of embryonic stem (ES) cell pluripotency. Also catalyzes the 3' uridylation of miR-26A, a miRNA that targets IL6 transcript. This abrogates the silencing of IL6 transcript, hence promoting cytokine expression. In the absence of LIN28A, TUT7 and TUT4 monouridylate group II pre-miRNAs, which includes most of pre-let7 members, that shapes an optimal 3' end overhang for efficient processing. Add oligo-U tails to truncated pre-miRNAS with a 5' overhang which may promote rapid degradation of non-functional pre-miRNA species. May also suppress Toll-like receptor-induced NF-kappa-B activation via binding to T2BP. Does not play a role in replication-dependent histone mRNA degradation. Due to functional redundancy between TUT4 and TUT7, the identification of the specific role of each of these proteins is difficult. TUT4 and TUT7 restrict retrotransposition of long interspersed element-1 (LINE-1) in cooperation with MOV10 counteracting the RNA chaperonne activity of L1RE1. TUT7 uridylates LINE-1 mRNAs in the cytoplasm which inhibits initiation of reverse transcription once in the nucleus, whereas uridylation by TUT4 destabilizes mRNAs in cytoplasmic ribonucleoprotein granules. This Mus musculus (Mouse) protein is Terminal uridylyltransferase 4.